The primary structure comprises 151 residues: Small ribosomal subunit protein uS13m (151 aa).

Belongs to the universal ribosomal protein uS13 family. As to quaternary structure, component of the mitochondrial small ribosomal subunit (mt-SSU). Mature yeast 74S mitochondrial ribosomes consist of a small (37S) and a large (54S) subunit. The 37S small subunit contains a 15S ribosomal RNA (15S mt-rRNA) and at least 32 different proteins. The 54S large subunit contains a 21S rRNA (21S mt-rRNA) and at least 45 different proteins.

The protein resides in the mitochondrion. Component of the mitochondrial ribosome (mitoribosome), a dedicated translation machinery responsible for the synthesis of mitochondrial genome-encoded proteins, including at least some of the essential transmembrane subunits of the mitochondrial respiratory chain. The mitoribosomes are attached to the mitochondrial inner membrane and translation products are cotranslationally integrated into the membrane. The sequence is that of Small ribosomal subunit protein uS13m (sws2) from Schizosaccharomyces pombe (strain 972 / ATCC 24843) (Fission yeast).